The primary structure comprises 429 residues: UDP-N-acetylglucosamine 1-carboxyvinyltransferase (429 aa).

22-23 (KN) lines the phosphoenolpyruvate pocket. Arginine 93 contributes to the UDP-N-acetyl-alpha-D-glucosamine binding site. The active-site Proton donor is cysteine 117. Residue cysteine 117 is modified to 2-(S-cysteinyl)pyruvic acid O-phosphothioketal. UDP-N-acetyl-alpha-D-glucosamine-binding positions include 122–126 (RPVDQ), aspartate 313, and isoleucine 335.

Belongs to the EPSP synthase family. MurA subfamily.

Its subcellular location is the cytoplasm. It carries out the reaction phosphoenolpyruvate + UDP-N-acetyl-alpha-D-glucosamine = UDP-N-acetyl-3-O-(1-carboxyvinyl)-alpha-D-glucosamine + phosphate. Its pathway is cell wall biogenesis; peptidoglycan biosynthesis. Functionally, cell wall formation. Adds enolpyruvyl to UDP-N-acetylglucosamine. This chain is UDP-N-acetylglucosamine 1-carboxyvinyltransferase, found in Variovorax paradoxus (strain S110).